A 131-amino-acid chain; its full sequence is Large ribosomal subunit protein bL17 (131 aa).

Belongs to the bacterial ribosomal protein bL17 family. In terms of assembly, part of the 50S ribosomal subunit. Contacts protein L32.

The polypeptide is Large ribosomal subunit protein bL17 (Burkholderia ambifaria (strain MC40-6)).